Here is a 920-residue protein sequence, read N- to C-terminus: DNA ligase (920 aa).

Residues 90-94, 139-140, and Glu173 each bind NAD(+); these read DAAYD and SL. The active-site N6-AMP-lysine intermediate is Lys175. Arg196, Glu235, Lys360, and Lys384 together coordinate NAD(+). Residues Cys481, Cys484, Cys500, and Cys506 each contribute to the Zn(2+) site. The tract at residues 659-691 is disordered; that stretch reads RAQGEAAIESAETQGDTASETTGAPTGAEAPLG. Residues 669–682 show a composition bias toward polar residues; that stretch reads AETQGDTASETTGA. In terms of domain architecture, BRCT spans 839–920; the sequence is SLPQTLAGKT…FAQLLATGTI (82 aa).

This sequence belongs to the NAD-dependent DNA ligase family. LigA subfamily. The cofactor is Mg(2+). Requires Mn(2+) as cofactor.

It catalyses the reaction NAD(+) + (deoxyribonucleotide)n-3'-hydroxyl + 5'-phospho-(deoxyribonucleotide)m = (deoxyribonucleotide)n+m + AMP + beta-nicotinamide D-nucleotide.. DNA ligase that catalyzes the formation of phosphodiester linkages between 5'-phosphoryl and 3'-hydroxyl groups in double-stranded DNA using NAD as a coenzyme and as the energy source for the reaction. It is essential for DNA replication and repair of damaged DNA. This is DNA ligase from Bifidobacterium longum (strain NCC 2705).